Reading from the N-terminus, the 325-residue chain is Tetraacyldisaccharide 4'-kinase (325 aa).

An ATP-binding site is contributed by 53–60 (SVGGNGKT).

It belongs to the LpxK family.

The enzyme catalyses a lipid A disaccharide + ATP = a lipid IVA + ADP + H(+). The protein operates within glycolipid biosynthesis; lipid IV(A) biosynthesis; lipid IV(A) from (3R)-3-hydroxytetradecanoyl-[acyl-carrier-protein] and UDP-N-acetyl-alpha-D-glucosamine: step 6/6. Functionally, transfers the gamma-phosphate of ATP to the 4'-position of a tetraacyldisaccharide 1-phosphate intermediate (termed DS-1-P) to form tetraacyldisaccharide 1,4'-bis-phosphate (lipid IVA). The protein is Tetraacyldisaccharide 4'-kinase of Actinobacillus succinogenes (strain ATCC 55618 / DSM 22257 / CCUG 43843 / 130Z).